The chain runs to 355 residues: Putative inositol monophosphatase 3 (355 aa).

Residues 16-36 (LPATIVAILLTFVLVYFLNFH) form a helical membrane-spanning segment. Residues glutamate 127, aspartate 167, leucine 169, aspartate 170, and aspartate 292 each coordinate Mg(2+). Glutamate 127 is a binding site for substrate. Residues 169–172 (LDAT) and aspartate 292 contribute to the substrate site.

Belongs to the inositol monophosphatase superfamily. Mg(2+) is required as a cofactor.

It is found in the membrane. The enzyme catalyses a myo-inositol phosphate + H2O = myo-inositol + phosphate. It participates in polyol metabolism; myo-inositol biosynthesis; myo-inositol from D-glucose 6-phosphate: step 2/2. This chain is Putative inositol monophosphatase 3, found in Drosophila melanogaster (Fruit fly).